Consider the following 1454-residue polypeptide: MAPVQLENHQLVPPGGGGGGSGGPPSAPAPPPPGAAVAAAAAAAASPGYRLSTLIEFLLHRAYSELMVLTDLLPRKSDVERKIEIVQFASRTRQLFVRLLALVKWANNAGKVEKCAMISSFLDQQAILFVDTADRLASLARDALVHARLPSFAIPYAIDVLTTGSYPRLPTCIRDKIIPPDPITKIEKQATLHQLNQILRHRLVTTDLPPQLANLTVANGRVKFRVEGEFEATLTVMGDDPDVPWRLLKLEILVEDKETGDGRALVHSMQISFIHQLVQSRLFADEKPLQDMYNCLHSFCLSLQLEVLHSQTLMLIRERWGDLVQVERYHAGKCLSLSVWNQQVLGRKTGTASVHKVTIKIDENDVSKPLQIFHDPPLPASDSKLVERAMKIDHLSIEKLLIDSVHARAHQKLQELKAILRGFNANENSSIETALPALVVPILEPCGNSECLHIFVDLHSGMFQLMLYGLDQATLDDMEKSVNDDMKRIIPWIQQLKFWLGQQRCKQSIKHLPTISSETLQLSNYSTHPIGNLSKNKLFIKLTRLPQYYIVVEMLEVPNKPTQLSYKYYFMSVNAADREDSPAMALLLQQFKENIQDLVFRTKTGKQTRTNAKRKLSDDPCPVESKKTKRAGEMCAFNKVLAHFVAMCDTNMPFVGLRLELSNLEIPHQGVQVEGDGFSHAIRLLKIPPCKGITEETQKALDRSLLDCTFRLQGRNNRTWVAELVFANCPLNGTSTREQGPSRHVYLTYENLLSEPVGGRKVVEMFLNDWNSIARLYECVLEFARSLPDIPAHLNIFSEVRVYNYRKLILCYGTTKGSSISIQWNSIHQKFHISLGTVGPNSGCSNCHNTILHQLQEMFNKTPNVVQLLQVLFDTQAPLNAINKLPTVPMLGLTQRTNTAYQCFSILPQSSTHIRLAFRNMYCIDIYCRSRGVVAIRDGAYSLFDNSKLVEGFYPAPGLKTFLNMFVDSNQDARRRSVNEDDNPPSPIGGDMMDSLISQLQPPPQQQPFPKQPGTSGAYPLTSPPTSYHSTVNQSPSMMHTQSPGNLHAASSPSGALRAPSPASFVPTPPPSSHGISIGPGASFASPHGTLDPSSPYTMVSPSGRAGNWPGSPQVSGPSPAARMPGMSPANPSLHSPVPDASHSPRAGTSSQTMPTNMPPPRKLPQRSWAASIPTILTHSALNILLLPSPTPGLVPGLAGSYLCSPLERFLGSVIMRRHLQRIIQQETLQLINSNEPGVIMFKTDALKCRVALSPKTNQTLQLKVTPENAGQWKPDELQVLEKFFETRVAGPPFKANTLIAFTKLLGAPTHILRDCVHIMKLELFPDQATQLKWNVQFCLTIPPSAPPIAPPGTPAVVLKSKMLFFLQLTQKTSVPPQEPVSIIVPIIYDMASGTTQQADIPRQQNSSVAAPMMVSNILKRFAEMNPPRQGECTIFAAVRDLMANLTLPPGGRP.

The interval 1–34 (MAPVQLENHQLVPPGGGGGGSGGPPSAPAPPPPG) is disordered. Positions 14 to 23 (PGGGGGGSGG) are enriched in gly residues. Residues 25–34 (PSAPAPPPPG) show a composition bias toward pro residues. The short motif at 69-73 (LTDLL) is the LXXLL motif 1 element. The interval 188 to 566 (KQATLHQLNQ…VPNKPTQLSY (379 aa)) is interaction with STAT2. The tract at residues 500–824 (LGQQRCKQSI…TKGSSISIQW (325 aa)) is interaction with SREBF1. Residues Ser617 and Ser986 each carry the phosphoserine modification. The disordered stretch occupies residues 973-1167 (ARRRSVNEDD…MPPPRKLPQR (195 aa)). Over residues 1001–1011 (QPPPQQQPFPK) the composition is skewed to pro residues. Composition is skewed to polar residues over residues 1024–1054 (PPTS…SSPS) and 1092–1101 (DPSSPYTMVS). Residues Ser1112, Ser1119, Ser1128, Ser1136, and Ser1144 each carry the phosphoserine modification. Over residues 1147–1156 (AGTSSQTMPT) the composition is skewed to polar residues. An LXXLL motif 2 motif is present at residues 1182–1186 (LNILL).

Belongs to the Mediator complex subunit 14 family. As to quaternary structure, interacts with GATA1. Component of the Mediator complex, which is composed of MED1, MED4, MED6, MED7, MED8, MED9, MED10, MED11, MED12, MED13, MED13L, MED14, MED15, MED16, MED17, MED18, MED19, MED20, MED21, MED22, MED23, MED24, MED25, MED26, MED27, MED29, MED30, MED31, CCNC, CDK8 and CDC2L6/CDK11. The MED12, MED13, CCNC and CDK8 subunits form a distinct module termed the CDK8 module. Mediator containing the CDK8 module is less active than Mediator lacking this module in supporting transcriptional activation. Individual preparations of the Mediator complex lacking one or more distinct subunits have been variously termed ARC, CRSP, DRIP, PC2, SMCC and TRAP. Interacts with AR, ESR1, SREBF1 and STAT2. Ubiquitous.

The protein localises to the nucleus. In terms of biological role, component of the Mediator complex, a coactivator involved in the regulated transcription of nearly all RNA polymerase II-dependent genes. Mediator functions as a bridge to convey information from gene-specific regulatory proteins to the basal RNA polymerase II transcription machinery. Mediator is recruited to promoters by direct interactions with regulatory proteins and serves as a scaffold for the assembly of a functional preinitiation complex with RNA polymerase II and the general transcription factors. This Homo sapiens (Human) protein is Mediator of RNA polymerase II transcription subunit 14 (MED14).